The sequence spans 270 residues: Small ribosomal subunit protein eS1 (270 aa).

The disordered stretch occupies residues 235–270 (GTSKGGAASTAAVAKGEEGVKVDRPEGYEPPVLETV). Low complexity predominate over residues 239 to 248 (GGAASTAAVA). The segment covering 249-261 (KGEEGVKVDRPEG) has biased composition (basic and acidic residues).

This sequence belongs to the eukaryotic ribosomal protein eS1 family. In terms of assembly, component of the small ribosomal subunit. Mature ribosomes consist of a small (40S) and a large (60S) subunit. The 40S subunit contains about 33 different proteins and 1 molecule of RNA (18S). The 60S subunit contains about 49 different proteins and 3 molecules of RNA (28S, 5.8S and 5S).

It is found in the cytoplasm. This Ixodes scapularis (Black-legged tick) protein is Small ribosomal subunit protein eS1.